Consider the following 80-residue polypeptide: uncharacterized protein (80 aa).

Positions 1–15 are cleaved as a signal peptide; it reads MEVIVVIVVIVVVIA. Positions 23–44 are enriched in low complexity; it reads NSNSNSNNSSDSSNESNNSDSS. Positions 23-52 are disordered; it reads NSNSNSNNSSDSSNESNNSDSSKNGGSDIY. 5 N-linked (GlcNAc...) asparagine glycosylation sites follow: Asn29, Asn30, Asn36, Asn39, and Asn64.

The protein localises to the secreted. This is an uncharacterized protein from Dictyostelium discoideum (Social amoeba).